A 98-amino-acid chain; its full sequence is uncharacterized protein (98 aa).

Positions 1–19 (MTERRRALSLAAVVDSINL) are cleaved as a signal peptide. The disordered stretch occupies residues 40 to 98 (PPGGSFSGIKRESRRKRPSRNEIYGGGVLEQEVRMRRWSKTASPPVSLHHRPLGPARKP). A compositionally biased stretch (basic residues) spans 87–98 (LHHRPLGPARKP).

This is an uncharacterized protein from Homo sapiens (Human).